The sequence spans 390 residues: Aspergillopepsin-1 (390 aa).

The N-terminal stretch at 1 to 19 (MVNTSLLAALTAYAVAVSA) is a signal peptide. Positions 20-67 (APTAPQVKGFSVNQVAVPKGVYRHPAAQLAKAYGKYHATVPTQVAAAA) are cleaved as a propeptide — activation peptide. Thr70 carries an O-linked (Man...) threonine glycan. Positions 84–387 (YITQVTVGDD…DASGPRLGFA (304 aa)) constitute a Peptidase A1 domain. Catalysis depends on residues Asp100 and Asp281.

This sequence belongs to the peptidase A1 family.

The protein localises to the secreted. The catalysed reaction is Hydrolysis of proteins with broad specificity. Generally favors hydrophobic residues in P1 and P1', but also accepts Lys in P1, which leads to activation of trypsinogen. Does not clot milk.. Its activity is regulated as follows. Inhibited by the microbial peptide pepstatin. Its function is as follows. Secreted aspartic endopeptidase that allows assimilation of proteinaceous substrates. The scissile peptide bond is attacked by a nucleophilic water molecule activated by two aspartic residues in the active site. Shows a broad primary substrate specificity. Favors hydrophobic residues at the P1 and P1' positions, but also accepts a lysine residue in the P1 position, leading to the activation of trypsinogen and chymotrypsinogen A. The protein is Aspergillopepsin-1 (pepA) of Aspergillus oryzae (Yellow koji mold).